Here is a 145-residue protein sequence, read N- to C-terminus: Large ribosomal subunit protein uL13 (145 aa).

Belongs to the universal ribosomal protein uL13 family. As to quaternary structure, part of the 50S ribosomal subunit.

This protein is one of the early assembly proteins of the 50S ribosomal subunit, although it is not seen to bind rRNA by itself. It is important during the early stages of 50S assembly. In Geobacillus sp. (strain WCH70), this protein is Large ribosomal subunit protein uL13.